Here is a 139-residue protein sequence, read N- to C-terminus: Putative nickel-responsive regulator (139 aa).

Ni(2+) contacts are provided by H79, H90, H92, and C98.

This sequence belongs to the transcriptional regulatory CopG/NikR family. Ni(2+) serves as cofactor.

Functionally, transcriptional regulator. The polypeptide is Putative nickel-responsive regulator (Solidesulfovibrio magneticus (strain ATCC 700980 / DSM 13731 / RS-1) (Desulfovibrio magneticus)).